A 198-amino-acid polypeptide reads, in one-letter code: Ribonuclease HII (198 aa).

One can recognise an RNase H type-2 domain in the interval 10–198; that stretch reads HLVAGVDEVG…PVKRALGLVS (189 aa). A divalent metal cation-binding residues include Asp16, Glu17, and Asp108.

Belongs to the RNase HII family. Mn(2+) is required as a cofactor. Mg(2+) serves as cofactor.

The protein resides in the cytoplasm. The catalysed reaction is Endonucleolytic cleavage to 5'-phosphomonoester.. Endonuclease that specifically degrades the RNA of RNA-DNA hybrids. The chain is Ribonuclease HII from Salmonella schwarzengrund (strain CVM19633).